The primary structure comprises 286 residues: uncharacterized protein (286 aa).

In terms of domain architecture, Radical SAM core spans 36–256; it reads ENPQHHPSIE…IKGCLLVQLK (221 aa). Residues Cys-50, Cys-54, and Cys-57 each contribute to the [4Fe-4S] cluster site.

Requires [4Fe-4S] cluster as cofactor.

This is an uncharacterized protein from Methanocaldococcus jannaschii (strain ATCC 43067 / DSM 2661 / JAL-1 / JCM 10045 / NBRC 100440) (Methanococcus jannaschii).